The primary structure comprises 192 residues: Ion-translocating oxidoreductase complex subunit A (192 aa).

6 consecutive transmembrane segments (helical) span residues 5-25, 39-59, 67-87, 102-122, 134-154, and 171-191; these read VLLL…FLGL, IGMG…AYLV, LGIE…VVQF, LLGI…VALL, IIYG…FASM, and SIAM…TGLV.

Belongs to the NqrDE/RnfAE family. The complex is composed of six subunits: RnfA, RnfB, RnfC, RnfD, RnfE and RnfG.

The protein resides in the cell inner membrane. Functionally, part of a membrane-bound complex that couples electron transfer with translocation of ions across the membrane. The sequence is that of Ion-translocating oxidoreductase complex subunit A from Vibrio parahaemolyticus serotype O3:K6 (strain RIMD 2210633).